Reading from the N-terminus, the 481-residue chain is MTQYTLKQASVLLQSKQISAVELASAYLAAIAEKNPALNGYITIDQDKTLAEARAADERIAQGNASALTGVPVAYKDIFCQTGWRSACASKMLDNFISPYTATVVQNLLDEGMVTLGRTNMDEFAMGSTNENSFYGAAKNPWNPEHVPGGSSGGSAAVVAARLAPAALGSDTGGSIRQPASHCGITGIKPTYGTVSRFGMVAYASSFDQAGPMAQTAEDCAILLNAITGFDPKDSTSLEREKEDYTRDLNQPLKGVKIGLPKEYFGEGNSADVLTALQNTIDLLKAQGAELIEVSLPQTKLSIPAYYVLASAEAGTNLSRYDGVRYGHRAAQFADLEEMYGKTRAEGFGSEVKRRIMIGTYVLSHGYYDAYYLKAQKLRRLVADDFQTAFARCDLILAPTAPTAAPKIGADASPVETYLSDIYTIAVNLAGLPALTLPAGFSGGGLPVGVQLVGNYFAEAKILGAAHQIQLNSDWHGKRPE.

Catalysis depends on charge relay system residues Lys76 and Ser151. The active-site Acyl-ester intermediate is Ser175.

This sequence belongs to the amidase family. GatA subfamily. In terms of assembly, heterotrimer of A, B and C subunits.

It carries out the reaction L-glutamyl-tRNA(Gln) + L-glutamine + ATP + H2O = L-glutaminyl-tRNA(Gln) + L-glutamate + ADP + phosphate + H(+). Its function is as follows. Allows the formation of correctly charged Gln-tRNA(Gln) through the transamidation of misacylated Glu-tRNA(Gln) in organisms which lack glutaminyl-tRNA synthetase. The reaction takes place in the presence of glutamine and ATP through an activated gamma-phospho-Glu-tRNA(Gln). This Neisseria meningitidis serogroup C / serotype 2a (strain ATCC 700532 / DSM 15464 / FAM18) protein is Glutamyl-tRNA(Gln) amidotransferase subunit A.